The sequence spans 412 residues: Cytochrome P450-SOY (412 aa).

Positions methionine 1–proline 25 are enriched in polar residues. The segment at methionine 1–tyrosine 38 is disordered. Cysteine 361 lines the heme pocket.

The protein belongs to the cytochrome P450 family. Heme is required as a cofactor.

The protein resides in the cytoplasm. In Streptomyces griseus, this protein is Cytochrome P450-SOY (cyp105D1).